The chain runs to 577 residues: Torulene dioxygenase (577 aa).

The tract at residues 1 to 20 (MALNGPGVYHRTREHEQEDA) is disordered. 4 residues coordinate Fe(2+): H239, H291, H361, and H570.

Belongs to the carotenoid oxygenase family. Fe(2+) is required as a cofactor.

It is found in the cytoplasm. Its subcellular location is the cytosol. It carries out the reaction torulene + O2 = 4'-apo-beta-carotenal + 3-methyl-2-butenal. It participates in carotenoid biosynthesis. In terms of biological role, torulene dioxygenase; part of pathway that mediates the biosynthesis of neurosporaxanthin, a carboxylic apocarotenoid acting as an essential protective pigments and leading to orange pigmentation. CarT mediates the cleavage of torulene into beta-apo-4'-carotenal, the aldehyde corresponding to the acidic neurosporaxanthin. Is also active on other monocyclic synthetic substrates such as beta-apo-8'-carotenal and beta-apo-10'-carotenal to produce beta-apo-14'-carotenal and retinal(beta-apo-15'-carotenal), respectively. Neurosporaxanthin is synthesized from geranyl-geranyl pyrophosphate (GGPP) through several enzymatic activities. Phytoene synthase activity performed by the bifunctional enzyme carAR first produces phytoene from geranyl-geranyl pyrophosphate (GGPP). The phytoene dehydrogenase carB then introduces 4 desaturations to lead to lycopene which is substrate of the carotene cyclase activity of carAR that leads to the production of gamma-carotene. CarB then performs a 5th desaturation reaction to yield torulene. Torulene is the substrate of the dioxidase carT that breaks the molecule, removing five carbon atoms to yield beta-apo-4'-carotenal, whereas the aldehyde dehydrogenase carD mediates the last step by converting beta-apo-4'-carotenal into neurosporaxanthin. This Gibberella fujikuroi (strain CBS 195.34 / IMI 58289 / NRRL A-6831) (Bakanae and foot rot disease fungus) protein is Torulene dioxygenase.